The chain runs to 236 residues: Baculoviral IAP repeat-containing protein 8 (236 aa).

The stretch at 7-70 (WLITFGTWMY…KWYPGCKYLL (64 aa)) is one BIR repeat. Residues Cys-39, Cys-42, His-59, and Cys-66 each coordinate Zn(2+). The RING-type zinc finger occupies 189 to 224 (CKICMDRHIAVVFIPCGHLVTCKQCAEAVDRCPMCN).

The protein belongs to the IAP family. As to quaternary structure, binds to caspase-9.

The protein localises to the cytoplasm. Protects against apoptosis mediated by BAX. The chain is Baculoviral IAP repeat-containing protein 8 (BIRC8) from Gorilla gorilla gorilla (Western lowland gorilla).